We begin with the raw amino-acid sequence, 360 residues long: Chorismate synthase (360 aa).

Residues arginine 48 and arginine 54 each contribute to the NADP(+) site. Residues 125–127, 246–247, glycine 286, 301–305, and arginine 327 each bind FMN; these read RSS, NA, and KPTSS.

This sequence belongs to the chorismate synthase family. As to quaternary structure, homotetramer. FMNH2 is required as a cofactor.

The enzyme catalyses 5-O-(1-carboxyvinyl)-3-phosphoshikimate = chorismate + phosphate. It participates in metabolic intermediate biosynthesis; chorismate biosynthesis; chorismate from D-erythrose 4-phosphate and phosphoenolpyruvate: step 7/7. Catalyzes the anti-1,4-elimination of the C-3 phosphate and the C-6 proR hydrogen from 5-enolpyruvylshikimate-3-phosphate (EPSP) to yield chorismate, which is the branch point compound that serves as the starting substrate for the three terminal pathways of aromatic amino acid biosynthesis. This reaction introduces a second double bond into the aromatic ring system. The polypeptide is Chorismate synthase (Actinobacillus succinogenes (strain ATCC 55618 / DSM 22257 / CCUG 43843 / 130Z)).